Consider the following 398-residue polypeptide: S-adenosylmethionine synthase (398 aa).

H17 contacts ATP. D19 serves as a coordination point for Mg(2+). Residue E45 participates in K(+) binding. E58 and Q101 together coordinate L-methionine. A flexible loop region spans residues 101–111 (QSPDIAQGVDK). ATP contacts are provided by residues 176–178 (DGK), 243–244 (RF), D252, 258–259 (RK), and K279. D252 is a binding site for L-methionine. K283 is an L-methionine binding site.

The protein belongs to the AdoMet synthase family. Homotetramer; dimer of dimers. It depends on Mg(2+) as a cofactor. K(+) is required as a cofactor.

The protein resides in the cytoplasm. The catalysed reaction is L-methionine + ATP + H2O = S-adenosyl-L-methionine + phosphate + diphosphate. Its pathway is amino-acid biosynthesis; S-adenosyl-L-methionine biosynthesis; S-adenosyl-L-methionine from L-methionine: step 1/1. In terms of biological role, catalyzes the formation of S-adenosylmethionine (AdoMet) from methionine and ATP. The overall synthetic reaction is composed of two sequential steps, AdoMet formation and the subsequent tripolyphosphate hydrolysis which occurs prior to release of AdoMet from the enzyme. The protein is S-adenosylmethionine synthase of Staphylococcus aureus (strain Mu3 / ATCC 700698).